The primary structure comprises 118 residues: MICOS complex subunit MIC13 (118 aa).

Over 1–7 (MVPRVWS) the chain is Mitochondrial matrix. The chain crosses the membrane as a helical span at residues 8–26 (LMRFLIKGSVAGGAIYLVY). Over 27 to 118 (DQDPLGPSDK…GWEYLKERTK (92 aa)) the chain is Mitochondrial intermembrane.

This sequence belongs to the MICOS complex subunit Mic13 family. Component of the mitochondrial contact site and cristae organizing system (MICOS) complex, composed of at least MICOS10/MIC10, CHCHD3/MIC19, CHCHD6/MIC25, APOO/MIC26, MICOS13/MIC13, APOOL/MIC27 and IMMT/MIC60. The MICOS complex associates with mitochondrial outer membrane proteins SAMM50, MTX1 and MTX2 (together described as components of the mitochondrial outer membrane sorting assembly machinery (SAM) complex) and DNAJC11, mitochondrial inner membrane protein TMEM11 and with HSPA9. The MICOS and SAM complexes together with DNAJC11 are part of a large protein complex spanning both membranes termed the mitochondrial intermembrane space bridging (MIB) complex.

It is found in the mitochondrion inner membrane. Its function is as follows. Component of the MICOS complex, a large protein complex of the mitochondrial inner membrane that plays crucial roles in the maintenance of crista junctions, inner membrane architecture, and formation of contact sites to the outer membrane. Constituent of mature MICOS complex, it is required for the formation of cristae junction (CJ) and maintenance of cristae morphology. Required for the incorporation of MICOS10/MIC10 into the MICOS complex. This Sus scrofa (Pig) protein is MICOS complex subunit MIC13.